The following is a 28-amino-acid chain: Unknown protein from spot 154 of 2D-PAGE of etiolated coleoptile (28 aa).

This Zea mays (Maize) protein is Unknown protein from spot 154 of 2D-PAGE of etiolated coleoptile.